The chain runs to 129 residues: Phosphoribosyl-AMP cyclohydrolase (129 aa).

Position 76 (D76) interacts with Mg(2+). Residue C77 participates in Zn(2+) binding. Residues D78 and D80 each coordinate Mg(2+). The Zn(2+) site is built by C97 and C104.

Belongs to the PRA-CH family. As to quaternary structure, homodimer. The cofactor is Mg(2+). It depends on Zn(2+) as a cofactor.

Its subcellular location is the cytoplasm. The catalysed reaction is 1-(5-phospho-beta-D-ribosyl)-5'-AMP + H2O = 1-(5-phospho-beta-D-ribosyl)-5-[(5-phospho-beta-D-ribosylamino)methylideneamino]imidazole-4-carboxamide. It participates in amino-acid biosynthesis; L-histidine biosynthesis; L-histidine from 5-phospho-alpha-D-ribose 1-diphosphate: step 3/9. Its function is as follows. Catalyzes the hydrolysis of the adenine ring of phosphoribosyl-AMP. This Polaromonas sp. (strain JS666 / ATCC BAA-500) protein is Phosphoribosyl-AMP cyclohydrolase.